Reading from the N-terminus, the 151-residue chain is Protein SprT-like (151 aa).

The SprT-like domain maps to 6 to 148; sequence LQALVERISL…FCRGKLKKIK (143 aa). His-67 provides a ligand contact to Zn(2+). The active site involves Glu-68. His-71 is a binding site for Zn(2+).

The protein belongs to the SprT family. Zn(2+) serves as cofactor.

The protein localises to the cytoplasm. The protein is Protein SprT-like of Anoxybacillus flavithermus (strain DSM 21510 / WK1).